The primary structure comprises 80 residues: MFPLAKNALSRLRVQSIQQAVARQIHQKRAPDFHDKYGNAVLASGATFCVAVWVYMATQIGIEWNPSPVGRVTPKEWREQ.

Residues 1–24 constitute a mitochondrion transit peptide; it reads MFPLAKNALSRLRVQSIQQAVARQ. Topologically, residues 25–32 are mitochondrial matrix; the sequence is IHQKRAPD. The helical transmembrane segment at 33–59 threads the bilayer; sequence FHDKYGNAVLASGATFCVAVWVYMATQ. At 60–80 the chain is on the mitochondrial intermembrane side; it reads IGIEWNPSPVGRVTPKEWREQ.

Belongs to the cytochrome c oxidase VIIb family. Component of the cytochrome c oxidase (complex IV, CIV), a multisubunit enzyme composed of 14 subunits. The complex is composed of a catalytic core of 3 subunits MT-CO1, MT-CO2 and MT-CO3, encoded in the mitochondrial DNA, and 11 supernumerary subunits COX4I1 (or COX4I2), COX5A, COX5B, COX6A2 (or COX6A1), COX6B1 (or COX6B2), COX6C, COX7A1 (or COX7A2), COX7B, COX7C, COX8B and NDUFA4, which are encoded in the nuclear genome. The complex exists as a monomer or a dimer and forms supercomplexes (SCs) in the inner mitochondrial membrane with NADH-ubiquinone oxidoreductase (complex I, CI) and ubiquinol-cytochrome c oxidoreductase (cytochrome b-c1 complex, complex III, CIII), resulting in different assemblies (supercomplex SCI(1)III(2)IV(1) and megacomplex MCI(2)III(2)IV(2)).

Its subcellular location is the mitochondrion inner membrane. Its pathway is energy metabolism; oxidative phosphorylation. Its function is as follows. Component of the cytochrome c oxidase, the last enzyme in the mitochondrial electron transport chain which drives oxidative phosphorylation. The respiratory chain contains 3 multisubunit complexes succinate dehydrogenase (complex II, CII), ubiquinol-cytochrome c oxidoreductase (cytochrome b-c1 complex, complex III, CIII) and cytochrome c oxidase (complex IV, CIV), that cooperate to transfer electrons derived from NADH and succinate to molecular oxygen, creating an electrochemical gradient over the inner membrane that drives transmembrane transport and the ATP synthase. Cytochrome c oxidase is the component of the respiratory chain that catalyzes the reduction of oxygen to water. Electrons originating from reduced cytochrome c in the intermembrane space (IMS) are transferred via the dinuclear copper A center (CU(A)) of subunit 2 and heme A of subunit 1 to the active site in subunit 1, a binuclear center (BNC) formed by heme A3 and copper B (CU(B)). The BNC reduces molecular oxygen to 2 water molecules using 4 electrons from cytochrome c in the IMS and 4 protons from the mitochondrial matrix. Plays a role in proper central nervous system (CNS) development in vertebrates. This Bos taurus (Bovine) protein is Cytochrome c oxidase subunit 7B, mitochondrial (COX7B).